Here is a 418-residue protein sequence, read N- to C-terminus: NADH-quinone oxidoreductase subunit D (418 aa).

Belongs to the complex I 49 kDa subunit family. NDH-1 is composed of 14 different subunits. Subunits NuoB, C, D, E, F, and G constitute the peripheral sector of the complex.

It is found in the cell inner membrane. It carries out the reaction a quinone + NADH + 5 H(+)(in) = a quinol + NAD(+) + 4 H(+)(out). Functionally, NDH-1 shuttles electrons from NADH, via FMN and iron-sulfur (Fe-S) centers, to quinones in the respiratory chain. The immediate electron acceptor for the enzyme in this species is believed to be ubiquinone. Couples the redox reaction to proton translocation (for every two electrons transferred, four hydrogen ions are translocated across the cytoplasmic membrane), and thus conserves the redox energy in a proton gradient. In Neisseria meningitidis serogroup A / serotype 4A (strain DSM 15465 / Z2491), this protein is NADH-quinone oxidoreductase subunit D.